The primary structure comprises 185 residues: Large ribosomal subunit protein uL10 (185 aa).

Positions Leu-165–Glu-185 are disordered.

It belongs to the universal ribosomal protein uL10 family. As to quaternary structure, part of the ribosomal stalk of the 50S ribosomal subunit. The N-terminus interacts with L11 and the large rRNA to form the base of the stalk. The C-terminus forms an elongated spine to which L12 dimers bind in a sequential fashion forming a multimeric L10(L12)X complex.

Its function is as follows. Forms part of the ribosomal stalk, playing a central role in the interaction of the ribosome with GTP-bound translation factors. This Streptomyces griseus subsp. griseus (strain JCM 4626 / CBS 651.72 / NBRC 13350 / KCC S-0626 / ISP 5235) protein is Large ribosomal subunit protein uL10.